Here is a 359-residue protein sequence, read N- to C-terminus: tRNA N6-adenosine threonylcarbamoyltransferase (359 aa).

The Fe cation site is built by His-121 and His-125. Substrate is bound by residues 143–147 (LVSGG), Asp-176, Gly-189, and Asn-286. Asp-311 is a binding site for Fe cation.

Belongs to the KAE1 / TsaD family. The cofactor is Fe(2+).

It is found in the cytoplasm. It catalyses the reaction L-threonylcarbamoyladenylate + adenosine(37) in tRNA = N(6)-L-threonylcarbamoyladenosine(37) in tRNA + AMP + H(+). Its function is as follows. Required for the formation of a threonylcarbamoyl group on adenosine at position 37 (t(6)A37) in tRNAs that read codons beginning with adenine. Is involved in the transfer of the threonylcarbamoyl moiety of threonylcarbamoyl-AMP (TC-AMP) to the N6 group of A37, together with TsaE and TsaB. TsaD likely plays a direct catalytic role in this reaction. The sequence is that of tRNA N6-adenosine threonylcarbamoyltransferase from Jannaschia sp. (strain CCS1).